Consider the following 293-residue polypeptide: Aspartate carbamoyltransferase catalytic subunit (293 aa).

Carbamoyl phosphate contacts are provided by Arg-50 and Thr-51. Residue Lys-78 coordinates L-aspartate. Carbamoyl phosphate contacts are provided by Arg-100, His-127, and Gln-130. Positions 160 and 210 each coordinate L-aspartate. Residues Ala-253 and Pro-254 each contribute to the carbamoyl phosphate site.

The protein belongs to the aspartate/ornithine carbamoyltransferase superfamily. ATCase family. Heterododecamer (2C3:3R2) of six catalytic PyrB chains organized as two trimers (C3), and six regulatory PyrI chains organized as three dimers (R2).

The enzyme catalyses carbamoyl phosphate + L-aspartate = N-carbamoyl-L-aspartate + phosphate + H(+). The protein operates within pyrimidine metabolism; UMP biosynthesis via de novo pathway; (S)-dihydroorotate from bicarbonate: step 2/3. Its function is as follows. Catalyzes the condensation of carbamoyl phosphate and aspartate to form carbamoyl aspartate and inorganic phosphate, the committed step in the de novo pyrimidine nucleotide biosynthesis pathway. This is Aspartate carbamoyltransferase catalytic subunit from Staphylococcus epidermidis (strain ATCC 35984 / DSM 28319 / BCRC 17069 / CCUG 31568 / BM 3577 / RP62A).